A 287-amino-acid polypeptide reads, in one-letter code: MKTMTGRLVAAALVCGGAFSGAAVSAGPDDPLVINGEIEIVTRAPTPAHLADRFDEIRSGWTFRTDDTQALEMDDFENSGMVFVEEARAVWDRPEGTEGKACADCHGAVDDGMYGLRAVYPKYVESAGKVRTVEQMINACRTSRMGAPEWDYIGPDMTAMVALIASVSRGMPVSVAIDGPAQSTWEKGREIYYTRYGQLDLSCASCHEQYFDHYIRADHLSQGQINGFPSYRLKNARLNAVHDRFRGCIRDTRGVPFAVGSPEFVALELYVASRGNGLSVEGPSVRN.

Positions M1 to A26 are cleaved as a signal peptide. The 95-residue stretch at D74–S168 folds into the Cytochrome c domain. The heme c site is built by C102, C105, H106, C140, C203, C206, and H207. R244 contributes to the substrate binding site. Position 248 (C248) interacts with heme c. C248 acts as the Cysteine persulfide intermediate in catalysis.

The protein belongs to the SoxA family. Heterodimer of SoxA and SoxX. It depends on heme c as a cofactor. In terms of processing, cysteine persulfide at Cys-248.

Its subcellular location is the periplasm. The enzyme catalyses L-cysteinyl-[SoxY protein] + thiosulfate + 2 Fe(III)-[cytochrome c] = S-sulfosulfanyl-L-cysteinyl-[SoxY protein] + 2 Fe(II)-[cytochrome c] + 2 H(+). The catalysed reaction is S-sulfanyl-L-cysteinyl-[SoxY protein] + thiosulfate + 2 Fe(III)-[cytochrome c] = S-(2-sulfodisulfanyl)-L-cysteinyl-[SoxY protein] + 2 Fe(II)-[cytochrome c] + 2 H(+). C-type diheme cytochrome, which is part of the SoxAX cytochrome complex involved in sulfur oxidation. The SoxAX complex catalyzes the formation of a heterodisulfide bond between the conserved cysteine residue on a sulfur carrier SoxYZ complex subunit SoxY and thiosulfate or other inorganic sulfur substrates. This leads to the liberation of two electrons, which may be transferred from the SoxAX complex to another cytochrome c and which then may be used for reductive CO(2) fixation. The polypeptide is L-cysteine S-thiosulfotransferase subunit SoxA (Rhodovulum sulfidophilum (Rhodobacter sulfidophilus)).